Reading from the N-terminus, the 130-residue chain is Fluoride-specific ion channel FluC (130 aa).

4 helical membrane passes run 2–22, 35–55, 72–92, and 107–127; these read GLLL…RFAL, IGIL…AAFL, LFVT…LDIL, and ILVS…FIMG. G79 and T82 together coordinate Na(+).

This sequence belongs to the fluoride channel Fluc/FEX (TC 1.A.43) family.

Its subcellular location is the cell inner membrane. It carries out the reaction fluoride(in) = fluoride(out). With respect to regulation, na(+) is not transported, but it plays an essential structural role and its presence is essential for fluoride channel function. In terms of biological role, fluoride-specific ion channel. Important for reducing fluoride concentration in the cell, thus reducing its toxicity. The polypeptide is Fluoride-specific ion channel FluC (Francisella philomiragia subsp. philomiragia (strain ATCC 25017 / CCUG 19701 / FSC 153 / O#319-036)).